The chain runs to 92 residues: Neuropeptide F (92 aa).

A signal peptide spans methionine 1–alanine 27. The propeptide occupies glutamine 28–tyrosine 51. Phenylalanine 60 is subject to Phenylalanine amide. Positions alanine 64–arginine 92 are excised as a propeptide.

The protein belongs to the NPY family. In terms of tissue distribution, widely expressed in the nervous system. Expressed in corpora cardiaca, hypocerebral ganglion, frontal ganglion, protocerebrum, antennal lobe, tritocerebrum and thoracic ganglia. Not detected in corpora allata, pars intercerebralis, circumesophageal connectives, subesophageal ganglion, abdominal ganglion and abdominal perisympathetic organs.

The protein localises to the secreted. Functionally, accelerates ovarian maturation in females. The chain is Neuropeptide F from Locusta migratoria (Migratory locust).